A 283-amino-acid chain; its full sequence is Pre-mRNA-splicing factor CWC23 (283 aa).

One can recognise a J domain in the interval 15–87; the sequence is NLYDVLELPT…DVRPHYDRWL (73 aa).

The protein belongs to the DnaJ family. Belongs to the CWC complex (or CEF1-associated complex), a spliceosome sub-complex reminiscent of a late-stage spliceosome composed of the U2, U5 and U6 snRNAs and at least BUD13, BUD31, BRR2, CDC40, CEF1, CLF1, CUS1, CWC2, CWC15, CWC21, CWC22, CWC23, CWC24, CWC25, CWC27, ECM2, HSH155, IST3, ISY1, LEA1, MSL1, NTC20, PRP8, PRP9, PRP11, PRP19, PRP21, PRP22, PRP45, PRP46, SLU7, SMB1, SMD1, SMD2, SMD3, SMX2, SMX3, SNT309, SNU114, SPP2, SYF1, SYF2, RSE1 and YJU2.

The protein localises to the cytoplasm. The protein resides in the nucleus. In terms of biological role, involved in pre-mRNA splicing. May be involved in endoplasmic reticulum-associated protein degradation (ERAD) and required for growth at low and high temperatures. This Saccharomyces cerevisiae (strain ATCC 204508 / S288c) (Baker's yeast) protein is Pre-mRNA-splicing factor CWC23 (CWC23).